An 821-amino-acid chain; its full sequence is Condensin-2 complex subunit kle-2 (821 aa).

The disordered stretch occupies residues 389–426 (VMQNDEPNTSRRPDENYAPMDFDDDFGGGGDDDDDDYI). The span at 409 to 424 (DFDDDFGGGGDDDDDD) shows a compositional bias: acidic residues. Positions 529-561 (TAILAEKKRRIKEKTAKIREARIQNMQRKRTAR) form a coiled coil.

This sequence belongs to the CND2 H2 (condensin-2 subunit 2) family. As to quaternary structure, component of the condensin II complex, which contains the mix-1/SMC2 and smc-4/SMC4 heterodimer, and three non SMC subunits, capg-2, kle-2 and hcp-6 that probably regulate the complex. Within the complex, interacts with mix-1, smc-4, capg-2 and hcp-6.

Its subcellular location is the nucleus. The protein localises to the chromosome. It is found in the centromere. Regulatory subunit of the condensin II complex, a complex that seems to play a role in prophase chromosome condensation and in chromosome segregation in mitosis and in meiosis. The chain is Condensin-2 complex subunit kle-2 (kle-2) from Caenorhabditis elegans.